The primary structure comprises 127 residues: Large ribosomal subunit protein bL12 (127 aa).

The protein belongs to the bacterial ribosomal protein bL12 family. As to quaternary structure, homodimer. Part of the ribosomal stalk of the 50S ribosomal subunit. Forms a multimeric L10(L12)X complex, where L10 forms an elongated spine to which 2 to 4 L12 dimers bind in a sequential fashion. Binds GTP-bound translation factors.

In terms of biological role, forms part of the ribosomal stalk which helps the ribosome interact with GTP-bound translation factors. Is thus essential for accurate translation. The polypeptide is Large ribosomal subunit protein bL12 (Phytoplasma mali (strain AT)).